Reading from the N-terminus, the 249-residue chain is 5'-nucleotidase SurE (249 aa).

D9, D10, S40, and N92 together coordinate a divalent metal cation.

This sequence belongs to the SurE nucleotidase family. A divalent metal cation serves as cofactor.

The protein resides in the cytoplasm. The catalysed reaction is a ribonucleoside 5'-phosphate + H2O = a ribonucleoside + phosphate. Its function is as follows. Nucleotidase that shows phosphatase activity on nucleoside 5'-monophosphates. This chain is 5'-nucleotidase SurE, found in Shewanella putrefaciens (strain CN-32 / ATCC BAA-453).